An 80-amino-acid polypeptide reads, in one-letter code: Metallothionein-like protein type 2, MT2-22 (80 aa).

Belongs to the metallothionein superfamily. Type 15 family.

Its function is as follows. Metallothioneins have a high content of cysteine residues that bind various heavy metals. The chain is Metallothionein-like protein type 2, MT2-22 from Brassica juncea (Indian mustard).